Here is a 194-residue protein sequence, read N- to C-terminus: Probable proteasome subunit beta type-4 (194 aa).

It belongs to the peptidase T1B family. As to quaternary structure, the 26S proteasome consists of a 20S proteasome core and two 19S regulatory subunits. The 20S proteasome core is composed of 28 subunits that are arranged in four stacked rings, resulting in a barrel-shaped structure. The two end rings are each formed by seven alpha subunits, and the two central rings are each formed by seven beta subunits. The catalytic chamber with the active sites is on the inside of the barrel.

Its subcellular location is the cytoplasm. The protein localises to the nucleus. Functionally, non-catalytic component of the proteasome, a multicatalytic proteinase complex which is characterized by its ability to cleave peptides with Arg, Phe, Tyr, Leu, and Glu adjacent to the leaving group at neutral or slightly basic pH. The proteasome has an ATP-dependent proteolytic activity. The polypeptide is Probable proteasome subunit beta type-4 (PRO2) (Meyerozyma guilliermondii (strain ATCC 6260 / CBS 566 / DSM 6381 / JCM 1539 / NBRC 10279 / NRRL Y-324) (Yeast)).